The sequence spans 172 residues: Protein-export protein SecB (172 aa).

This sequence belongs to the SecB family. Homotetramer, a dimer of dimers. One homotetramer interacts with 1 SecA dimer.

It is found in the cytoplasm. Functionally, one of the proteins required for the normal export of preproteins out of the cell cytoplasm. It is a molecular chaperone that binds to a subset of precursor proteins, maintaining them in a translocation-competent state. It also specifically binds to its receptor SecA. This chain is Protein-export protein SecB, found in Maricaulis maris (strain MCS10) (Caulobacter maris).